Reading from the N-terminus, the 264-residue chain is Ion-translocating oxidoreductase complex subunit B (264 aa).

Residues 5–25 (LINSIAVLAGLGFAVGVMLVI) traverse the membrane as a helical segment. Residues 33–92 (DSNPLIDDVASLLPGANCGGCGFAGCAACAEAIVEQGAPVNSCPVGGFEVAKQIGALLGQ) enclose the 4Fe-4S domain. Residues Cys-50, Cys-53, Cys-58, Cys-75, Cys-138, Cys-142, Cys-148, Cys-152, Cys-172, Cys-175, Cys-178, Cys-182, Cys-217, Cys-220, Cys-223, Cys-227, Cys-246, Cys-249, Cys-252, and Cys-256 each contribute to the [4Fe-4S] cluster site. 4Fe-4S ferredoxin-type domains lie at 127–162 (VALMLCDSRKGCTYGCLGLGTCVQACQFGALSMGED), 163–192 (GFPVVNKALCTSCGNCIAACPNGVLTFARD), 207–236 (KDVKAVCEVGCIGCKKCEKECPAGAIRVTE), and 237–264 (FLAEIDQEKCTACGACVAICPQKAIELR).

Belongs to the 4Fe4S bacterial-type ferredoxin family. RnfB subfamily. The Rnf complex is probably composed of eight subunits, including RnfA, RnfB, RnfC, RnfD, RnfE and RnfG. [4Fe-4S] cluster is required as a cofactor.

It localises to the cell membrane. Functionally, part of a membrane-bound complex that couples electron transfer with translocation of ions across the membrane. Catalyzes Na(+) transport, most probably coupled to electron transfer from reduced ferredoxin to methanophenazine and heterodisulfide reductase. Involved in heterodisulfide reduction during methanogenesis from acetate. The polypeptide is Ion-translocating oxidoreductase complex subunit B (Methanosarcina acetivorans (strain ATCC 35395 / DSM 2834 / JCM 12185 / C2A)).